Reading from the N-terminus, the 294-residue chain is Cytidine deaminase (294 aa).

CMP/dCMP-type deaminase domains are found at residues 48 to 168 (NDDE…FGPK) and 187 to 294 (DNTS…RVTL). A substrate-binding site is contributed by 89 to 91 (NME). H102 contributes to the Zn(2+) binding site. The Proton donor role is filled by E104. Residues C129 and C132 each contribute to the Zn(2+) site.

Belongs to the cytidine and deoxycytidylate deaminase family. Homodimer. Requires Zn(2+) as cofactor.

The catalysed reaction is cytidine + H2O + H(+) = uridine + NH4(+). It catalyses the reaction 2'-deoxycytidine + H2O + H(+) = 2'-deoxyuridine + NH4(+). Its function is as follows. This enzyme scavenges exogenous and endogenous cytidine and 2'-deoxycytidine for UMP synthesis. This is Cytidine deaminase from Proteus mirabilis (strain HI4320).